A 120-amino-acid polypeptide reads, in one-letter code: Ribonuclease P protein component 2 (120 aa).

It belongs to the eukaryotic/archaeal RNase P protein component 2 family. As to quaternary structure, consists of a catalytic RNA component and at least 4-5 protein subunits.

It localises to the cytoplasm. The enzyme catalyses Endonucleolytic cleavage of RNA, removing 5'-extranucleotides from tRNA precursor.. Functionally, part of ribonuclease P, a protein complex that generates mature tRNA molecules by cleaving their 5'-ends. The protein is Ribonuclease P protein component 2 of Methanobrevibacter smithii (strain ATCC 35061 / DSM 861 / OCM 144 / PS).